A 1576-amino-acid chain; its full sequence is DNA-directed RNA polymerase subunit beta' (1576 aa).

Zn(2+) is bound by residues Cys-64, Cys-66, Cys-79, and Cys-82. Mg(2+) is bound by residues Asp-590, Asp-592, and Asp-594. Zn(2+) contacts are provided by Cys-928, Cys-1002, Cys-1009, and Cys-1012.

It belongs to the RNA polymerase beta' chain family. The RNAP catalytic core consists of 2 alpha, 1 beta, 1 beta' and 1 omega subunit. When a sigma factor is associated with the core the holoenzyme is formed, which can initiate transcription. Mg(2+) is required as a cofactor. Zn(2+) serves as cofactor.

The enzyme catalyses RNA(n) + a ribonucleoside 5'-triphosphate = RNA(n+1) + diphosphate. DNA-dependent RNA polymerase catalyzes the transcription of DNA into RNA using the four ribonucleoside triphosphates as substrates. The sequence is that of DNA-directed RNA polymerase subunit beta' from Aquifex pyrophilus.